The sequence spans 394 residues: Phosphoglycerate kinase (394 aa).

Residues Asp-21–Asn-23, Arg-37, His-60–Arg-63, Arg-119, and Arg-152 each bind substrate. ATP is bound by residues Lys-202, Glu-324, and Gly-350 to Ser-353.

It belongs to the phosphoglycerate kinase family. As to quaternary structure, monomer.

The protein localises to the cytoplasm. It catalyses the reaction (2R)-3-phosphoglycerate + ATP = (2R)-3-phospho-glyceroyl phosphate + ADP. The protein operates within carbohydrate degradation; glycolysis; pyruvate from D-glyceraldehyde 3-phosphate: step 2/5. In Herpetosiphon aurantiacus (strain ATCC 23779 / DSM 785 / 114-95), this protein is Phosphoglycerate kinase.